The following is a 229-amino-acid chain: Histone H1 (229 aa).

Disordered stretches follow at residues 1 to 52 (MADT…SSHP) and 125 to 229 (APAL…RTRK). The segment covering 32–45 (KEKKKVIAAKKPKS) has biased composition (basic residues). The H15 domain occupies 50-119 (SHPSFFEMIS…KVKNSFKLPS (70 aa)). A compositionally biased stretch (low complexity) spans 125–138 (APALAKKPTIPKPK). The span at 139-160 (VAAKPKTAKIGAKPKAKAKVAA) shows a compositional bias: basic residues. 2 stretches are compositionally biased toward low complexity: residues 161–177 (KTKA…PAAK) and 185–205 (KPKT…VASP). The segment covering 206 to 229 (GKKKAVPVKKVKTVKSPAGKRTRK) has biased composition (basic residues).

Belongs to the histone H1/H5 family.

The protein localises to the nucleus. The protein resides in the chromosome. Histones H1 are necessary for the condensation of nucleosome chains into higher-order structures. This is Histone H1 from Euphorbia esula (Leafy spurge).